We begin with the raw amino-acid sequence, 277 residues long: Ras suppressor protein 1 (277 aa).

The disordered stretch occupies residues 1–24 (MSKSLKKLVEESREKNQPEVDMSD). N-acetylserine is present on Ser2. Positions 7-24 (KLVEESREKNQPEVDMSD) are enriched in basic and acidic residues. 7 LRR repeats span residues 41–63 (HITQLVLSHNKLTMVPPNIAELK), 64–85 (NLEVLNFFNNQIEELPTQISSL), 87–109 (KLKHLNLGMNRLNTLPRGFGSLP), 110–133 (ALEVLDLTYNNLSENSLPGNFFYL), 135–156 (TLRALYLSDNDFEILPPDIGKL), 158–179 (KLQILSLRDNDLISLPKEIGEL), and 181–202 (QLKELHIQGNRLTVLPPELGNL). Residues 250-277 (MQANPEPPKKNNDKSKKISRKPLAAKNR) form a disordered region. Positions 256–265 (PPKKNNDKSK) are enriched in basic and acidic residues.

Potentially plays a role in the Ras signal transduction pathway. Capable of suppressing v-Ras transformation in vitro. The polypeptide is Ras suppressor protein 1 (RSU1) (Homo sapiens (Human)).